Here is a 365-residue protein sequence, read N- to C-terminus: Carbamoyl phosphate synthase small chain (365 aa).

CPSase regions lie at residues 1-166 (MKRQ…PSPG) and 1-169 (MKRQ…GRGH). The L-glutamine site is built by serine 45, glycine 218, and glycine 220. The region spanning 170 to 357 (RVVLVDFGMK…LTMIENFKKE (188 aa)) is the Glutamine amidotransferase type-1 domain. The Nucleophile role is filled by cysteine 245. Positions 246, 249, 287, 289, and 290 each coordinate L-glutamine. Residues histidine 330 and glutamate 332 contribute to the active site.

The protein belongs to the CarA family. As to quaternary structure, composed of two chains; the small (or glutamine) chain promotes the hydrolysis of glutamine to ammonia, which is used by the large (or ammonia) chain to synthesize carbamoyl phosphate. Tetramer of heterodimers (alpha,beta)4.

The enzyme catalyses hydrogencarbonate + L-glutamine + 2 ATP + H2O = carbamoyl phosphate + L-glutamate + 2 ADP + phosphate + 2 H(+). It catalyses the reaction L-glutamine + H2O = L-glutamate + NH4(+). It participates in amino-acid biosynthesis; L-arginine biosynthesis; carbamoyl phosphate from bicarbonate: step 1/1. It functions in the pathway pyrimidine metabolism; UMP biosynthesis via de novo pathway; (S)-dihydroorotate from bicarbonate: step 1/3. Functionally, small subunit of the glutamine-dependent carbamoyl phosphate synthetase (CPSase). CPSase catalyzes the formation of carbamoyl phosphate from the ammonia moiety of glutamine, carbonate, and phosphate donated by ATP, constituting the first step of 2 biosynthetic pathways, one leading to arginine and/or urea and the other to pyrimidine nucleotides. The small subunit (glutamine amidotransferase) binds and cleaves glutamine to supply the large subunit with the substrate ammonia. The polypeptide is Carbamoyl phosphate synthase small chain (Bacillus cereus (strain ATCC 14579 / DSM 31 / CCUG 7414 / JCM 2152 / NBRC 15305 / NCIMB 9373 / NCTC 2599 / NRRL B-3711)).